The primary structure comprises 374 residues: Chaperone protein DnaJ (374 aa).

One can recognise a J domain in the interval 5-70; it reads DYYEVLGVER…NKRAAYDQYG (66 aa). The CR-type zinc-finger motif lies at 133-211; sequence GTSVNIRVPT…CHGEGRVEEY (79 aa). Zn(2+) is bound by residues C146, C149, C163, C166, C185, C188, C199, and C202. CXXCXGXG motif repeat units lie at residues 146–153, 163–170, 185–192, and 199–206; these read CKPCDGSG, CPTCGGIG, CPRCHGQG, and CDSCHGEG.

Belongs to the DnaJ family. As to quaternary structure, homodimer. Zn(2+) serves as cofactor.

Its subcellular location is the cytoplasm. Participates actively in the response to hyperosmotic and heat shock by preventing the aggregation of stress-denatured proteins and by disaggregating proteins, also in an autonomous, DnaK-independent fashion. Unfolded proteins bind initially to DnaJ; upon interaction with the DnaJ-bound protein, DnaK hydrolyzes its bound ATP, resulting in the formation of a stable complex. GrpE releases ADP from DnaK; ATP binding to DnaK triggers the release of the substrate protein, thus completing the reaction cycle. Several rounds of ATP-dependent interactions between DnaJ, DnaK and GrpE are required for fully efficient folding. Also involved, together with DnaK and GrpE, in the DNA replication of plasmids through activation of initiation proteins. The polypeptide is Chaperone protein DnaJ (Pseudomonas fluorescens (strain SBW25)).